The following is a 366-amino-acid chain: Growth hormone secretagogue receptor type 1 (366 aa).

Topologically, residues 1-40 (MWNATPSEEPGSNLTRAELGWDAPPGNDSLADELLQLFPA) are extracellular. N-linked (GlcNAc...) asparagine glycosylation is found at asparagine 13 and asparagine 27. A helical membrane pass occupies residues 41 to 66 (PLLAGVTATCVALFVVGIAGNLLTML). The Cytoplasmic segment spans residues 67–72 (VVSRFR). The chain crosses the membrane as a helical span at residues 73–96 (ELRTTTNLYLSSMAFSDLLIFLCM). Topologically, residues 97-117 (PLDLVRLWQYRPWNFGDLLCK) are extracellular. A disulfide bond links cysteine 116 and cysteine 198. A helical membrane pass occupies residues 118–139 (LFQFVSESCTYATVLTITALSV). The Cytoplasmic portion of the chain corresponds to 140–162 (ERYFAICFPLRAKVVVTKGRVKL). Residues 163-183 (VILVIWALAFCSAGPIFVLVG) traverse the membrane as a helical segment. The Extracellular portion of the chain corresponds to 184–211 (VEHENGTDPQDTNECRATEFAVRSGLLT). Asparagine 188 is a glycosylation site (N-linked (GlcNAc...) asparagine). Residues 212-235 (IMVWVSSVFFFLPVFCLTVLYSLI) form a helical membrane-spanning segment. The Cytoplasmic portion of the chain corresponds to 236-263 (GRKLWRRKRGDGAVGSSLRDQNHRQTVK). The chain crosses the membrane as a helical span at residues 264–285 (MLAVVVFAFILCWLPFHVGRYL). At 286-302 (FSKSFEPGSLEIAQISQ) the chain is on the extracellular side. The helical transmembrane segment at 303–326 (YCNLVSFVLFYLSAAINPILYNIM) threads the bilayer. Over 327–366 (SKKYRVAVFKLLGFEPFSQRKLSTLKDESSRAWTKSSINT) the chain is Cytoplasmic.

It belongs to the G-protein coupled receptor 1 family.

It localises to the cell membrane. Functionally, receptor for ghrelin, coupled to G-alpha-11 proteins. Stimulates growth hormone secretion. Also binds other growth hormone releasing peptides (GHRP) (e.g. Met-enkephalin and GHRP-6) as well as non-peptide, low molecular weight secretagogues (e.g. L-692,429, MK-0677, adenosine). This Oryctolagus cuniculus (Rabbit) protein is Growth hormone secretagogue receptor type 1 (GHSR).